The following is a 187-amino-acid chain: Elongation factor P (187 aa).

The protein belongs to the elongation factor P family.

It localises to the cytoplasm. The protein operates within protein biosynthesis; polypeptide chain elongation. Its function is as follows. Involved in peptide bond synthesis. Stimulates efficient translation and peptide-bond synthesis on native or reconstituted 70S ribosomes in vitro. Probably functions indirectly by altering the affinity of the ribosome for aminoacyl-tRNA, thus increasing their reactivity as acceptors for peptidyl transferase. The chain is Elongation factor P from Corynebacterium urealyticum (strain ATCC 43042 / DSM 7109).